We begin with the raw amino-acid sequence, 220 residues long: Deoxyribose-phosphate aldolase (220 aa).

Aspartate 89 (proton donor/acceptor) is an active-site residue. The Schiff-base intermediate with acetaldehyde role is filled by lysine 150. Lysine 182 functions as the Proton donor/acceptor in the catalytic mechanism.

Belongs to the DeoC/FbaB aldolase family. DeoC type 1 subfamily.

The protein resides in the cytoplasm. The enzyme catalyses 2-deoxy-D-ribose 5-phosphate = D-glyceraldehyde 3-phosphate + acetaldehyde. Its pathway is carbohydrate degradation; 2-deoxy-D-ribose 1-phosphate degradation; D-glyceraldehyde 3-phosphate and acetaldehyde from 2-deoxy-alpha-D-ribose 1-phosphate: step 2/2. Catalyzes a reversible aldol reaction between acetaldehyde and D-glyceraldehyde 3-phosphate to generate 2-deoxy-D-ribose 5-phosphate. This is Deoxyribose-phosphate aldolase from Mycoplasmoides pirum (Mycoplasma pirum).